A 232-amino-acid chain; its full sequence is Dehydrin DHN3 (232 aa).

Positions 1–14 are enriched in polar residues; it reads MSQYQNQYGAQTGM. Disordered regions lie at residues 1–66 and 140–232; these read MSQY…QHRG and EHHG…CTGH. The span at 49–60 shows a compositional bias: gly residues; sequence TTGGATGQGHGH. The span at 140 to 157 shows a compositional bias: basic and acidic residues; sequence EHHGDKKGVMDKIKEKIP. Positions 159–168 are enriched in polar residues; the sequence is TEQSRTNTDG. A compositionally biased stretch (basic and acidic residues) spans 198–223; that stretch reads EQQDVHHGDEQHGEKKGIMEKIKEKL.

It belongs to the plant dehydrin family.

The sequence is that of Dehydrin DHN3 (DHN3) from Pisum sativum (Garden pea).